We begin with the raw amino-acid sequence, 269 residues long: 3-methyl-2-oxobutanoate hydroxymethyltransferase (269 aa).

D52 and D91 together coordinate Mg(2+). Residues 52–53 (DT), D91, and K121 contribute to the 3-methyl-2-oxobutanoate site. E123 is a binding site for Mg(2+). Catalysis depends on E186, which acts as the Proton acceptor.

This sequence belongs to the PanB family. As to quaternary structure, homodecamer; pentamer of dimers. Mg(2+) is required as a cofactor.

Its subcellular location is the cytoplasm. The enzyme catalyses 3-methyl-2-oxobutanoate + (6R)-5,10-methylene-5,6,7,8-tetrahydrofolate + H2O = 2-dehydropantoate + (6S)-5,6,7,8-tetrahydrofolate. It participates in cofactor biosynthesis; (R)-pantothenate biosynthesis; (R)-pantoate from 3-methyl-2-oxobutanoate: step 1/2. Its function is as follows. Catalyzes the reversible reaction in which hydroxymethyl group from 5,10-methylenetetrahydrofolate is transferred onto alpha-ketoisovalerate to form ketopantoate. The polypeptide is 3-methyl-2-oxobutanoate hydroxymethyltransferase (Rhodopirellula baltica (strain DSM 10527 / NCIMB 13988 / SH1)).